The sequence spans 96 residues: RING finger protein Z (96 aa).

The segment covering 1–10 (MGNCRSKQES) has biased composition (basic and acidic residues). Residues 1–21 (MGNCRSKQESHPICPNTQTPE) form a disordered region. A lipid anchor (N-myristoyl glycine; by host) is attached at G2. The RING-type; atypical zinc finger occupies 41 to 77 (CKCCWFADRNLINCSDHYLCLRCLNVMLRTSNLCNIC). Residues 91–94 (PTAP) carry the PTAP/PSAP motif motif.

Belongs to the arenaviridae Z protein family. In terms of assembly, interacts with protein NP; this interaction probably directs the encapsidated genome to budding sites. Interacts (via RING domain) with polymerase L; this interaction inhibits viral transcription and replication, Z partially blocks the product exit tunnel for the releasing nascent RNA product. Interacts with the glycoprotein complex; this interaction plays a role in virion budding. Interacts with host eIF4E; this interaction results in eIF4E reduced affinity for its substrate, the 5'-m7 G cap structure. Interacts (via late-budding domain) with host TSG101; this interaction is essential for budding and release of viral particles. Interacts with host RPLP0; this interaction may serve to load ribosome-like particles inside the virion. Interacts with host PML; this interaction induces PML bodies redistribution in the cytoplasm upon viral infection. In terms of processing, myristoylation is required for the role of RING finger protein Z in assembly and budding.

It is found in the virion. The protein localises to the host cytoplasm. It localises to the host perinuclear region. The protein resides in the host cell membrane. Plays a crucial role in virion assembly and budding. Expressed late in the virus life cycle, it acts as an inhibitor of viral transcription and RNA synthesis by interacting with the viral polymerase L. Presumably recruits the NP encapsidated genome to cellular membranes at budding sites via direct interaction with NP. Plays critical roles in the final steps of viral release by interacting with host TSG101, a member of the vacuolar protein-sorting pathway and using other cellular host proteins involved in vesicle formation pathway. The budding of the virus progeny occurs after association of protein Z with the viral glycoprotein complex SSP-GP1-GP2 at the cell periphery, step that requires myristoylation of protein Z. Also selectively represses protein production by associating with host eIF4E. In cell-based minigenome assay, has an inhibitory effect on the ribonucleoprotein machinery (vRNP), which is responsible for the replication and transcription of the viral genome. This Hylaeamys megacephalus (Large-headed rice rat) protein is RING finger protein Z.